The following is a 135-amino-acid chain: uncharacterized protein (135 aa).

In terms of domain architecture, VOC spans 4-129; it reads SIVHIALVVN…YGNLWDLLQL (126 aa).

The protein to B.subtilis YwkD.

This is an uncharacterized protein from Shewanella frigidimarina (strain NCIMB 400).